The sequence spans 180 residues: Large ribosomal subunit protein uL6 (180 aa).

The protein belongs to the universal ribosomal protein uL6 family. Part of the 50S ribosomal subunit.

Its function is as follows. This protein binds to the 23S rRNA, and is important in its secondary structure. It is located near the subunit interface in the base of the L7/L12 stalk, and near the tRNA binding site of the peptidyltransferase center. In Picrophilus torridus (strain ATCC 700027 / DSM 9790 / JCM 10055 / NBRC 100828 / KAW 2/3), this protein is Large ribosomal subunit protein uL6.